A 615-amino-acid polypeptide reads, in one-letter code: Nuclear cap-binding protein subunit 3 (615 aa).

K12 is covalently cross-linked (Glycyl lysine isopeptide (Lys-Gly) (interchain with G-Cter in SUMO2)). The segment covering 15-27 (APAGPALGLPSPE) has biased composition (low complexity). A disordered region spans residues 15-43 (APAGPALGLPSPEVESGLERGEPEPMEVE). S25 carries the phosphoserine modification. K70 participates in a covalent cross-link: Glycyl lysine isopeptide (Lys-Gly) (interchain with G-Cter in SUMO2). Phosphoserine is present on S73. The interval 126-187 (ETIYICGVDE…MSSLPAQDKM (62 aa)) is RNA recognition motif (RRM) domain. The WLDD motif; essential for 7-methylguanosine-containing mRNA cap binding motif lies at 155-158 (WLDD). Disordered regions lie at residues 182–233 (PAQD…LDTL) and 332–400 (HSGL…MDYD). The segment covering 185–208 (DKMRSRDASEDKSSEKNKKDKQED) has biased composition (basic and acidic residues). Residue K186 forms a Glycyl lysine isopeptide (Lys-Gly) (interchain with G-Cter in SUMO2) linkage. Residues S209 and S210 each carry the phosphoserine modification. 2 stretches are compositionally biased toward acidic residues: residues 209–230 (SSDDDETEEGEVEDENSSDVEL) and 341–360 (EPIEEEEEEEEEEEDQDMDA). A compositionally biased stretch (basic and acidic residues) spans 361-383 (DDRVVVEYHEELPGLKQPRERSL). At T408 the chain carries Phosphothreonine. Phosphoserine is present on S410. 2 disordered regions span residues 430–454 (SIRNPMRADSISTSNIKNRIGNKLP) and 467–615 (EKRQ…EAES). The span at 506–516 (VRREPSSDVHS) shows a compositional bias: basic and acidic residues. K536 participates in a covalent cross-link: Glycyl lysine isopeptide (Lys-Gly) (interchain with G-Cter in SUMO2). Basic and acidic residues-rich tracts occupy residues 549–564 (KTKEKNTKKVDHRASG) and 580–593 (IKEKEESRQKKSRL). The residue at position 563 (S563) is a Phosphoserine. The span at 606–615 (ESSSGSEAES) shows a compositional bias: low complexity. S615 carries the post-translational modification Phosphoserine.

This sequence belongs to the NCBP3 family. Component of an alternative cap-binding complex (CBC) composed of NCBP1/CBP80 and NCBP3. Interacts with SRRT, KPNA3, THOC5 and EIF4A3.

The protein localises to the nucleus. It localises to the cytoplasm. Associates with NCBP1/CBP80 to form an alternative cap-binding complex (CBC) which plays a key role in mRNA export. NCBP3 serves as adapter protein linking the capped RNAs (m7GpppG-capped RNA) to NCBP1/CBP80. Unlike the conventional CBC with NCBP2 which binds both small nuclear RNA (snRNA) and messenger (mRNA) and is involved in their export from the nucleus, the alternative CBC with NCBP3 does not bind snRNA and associates only with mRNA thereby playing a role in only mRNA export. The alternative CBC is particularly important in cellular stress situations such as virus infections and the NCBP3 activity is critical to inhibit virus growth. The polypeptide is Nuclear cap-binding protein subunit 3 (Mus musculus (Mouse)).